The sequence spans 147 residues: Ribosome maturation factor RimP (147 aa).

Belongs to the RimP family.

It localises to the cytoplasm. In terms of biological role, required for maturation of 30S ribosomal subunits. The sequence is that of Ribosome maturation factor RimP from Legionella pneumophila (strain Lens).